The sequence spans 61 residues: Small ribosomal subunit protein uS14 (61 aa).

Zn(2+) contacts are provided by Cys24, Cys27, Cys40, and Cys43.

Belongs to the universal ribosomal protein uS14 family. Zinc-binding uS14 subfamily. Part of the 30S ribosomal subunit. Contacts proteins S3 and S10. The cofactor is Zn(2+).

Binds 16S rRNA, required for the assembly of 30S particles and may also be responsible for determining the conformation of the 16S rRNA at the A site. This is Small ribosomal subunit protein uS14 from Fervidobacterium nodosum (strain ATCC 35602 / DSM 5306 / Rt17-B1).